A 372-amino-acid polypeptide reads, in one-letter code: tRNA-specific 2-thiouridylase MnmA (372 aa).

ATP contacts are provided by residues 13-20 and methionine 39; that span reads GMSGGVDS. The tract at residues 99–101 is interaction with target base in tRNA; the sequence is NPD. Cysteine 104 (nucleophile) is an active-site residue. An intrachain disulfide couples cysteine 104 to cysteine 200. Residue glycine 128 participates in ATP binding. An interaction with tRNA region spans residues 150 to 152; sequence KDQ. The Cysteine persulfide intermediate role is filled by cysteine 200. Positions 310–311 are interaction with tRNA; sequence RY.

This sequence belongs to the MnmA/TRMU family.

It is found in the cytoplasm. It catalyses the reaction S-sulfanyl-L-cysteinyl-[protein] + uridine(34) in tRNA + AH2 + ATP = 2-thiouridine(34) in tRNA + L-cysteinyl-[protein] + A + AMP + diphosphate + H(+). Catalyzes the 2-thiolation of uridine at the wobble position (U34) of tRNA, leading to the formation of s(2)U34. The polypeptide is tRNA-specific 2-thiouridylase MnmA (Bacillus licheniformis (strain ATCC 14580 / DSM 13 / JCM 2505 / CCUG 7422 / NBRC 12200 / NCIMB 9375 / NCTC 10341 / NRRL NRS-1264 / Gibson 46)).